A 297-amino-acid chain; its full sequence is uncharacterized protein (297 aa).

Glutamate 46 is a catalytic residue.

It belongs to the PhzF family. In terms of assembly, homodimer and homotetramer.

This is an uncharacterized protein from Salmonella typhimurium (strain LT2 / SGSC1412 / ATCC 700720).